A 140-amino-acid polypeptide reads, in one-letter code: Natriuretic peptides A (140 aa).

The N-terminal stretch at 1 to 24 (MDTRGSFSCGFLLLLLIQLQPSRA) is a signal peptide. The propeptide occupies 25–111 (NPIYNLSPAK…KRLRGVQMPR (87 aa)). The tract at residues 55–94 (ALESNPDLQEPQTQEEIPPELTDDSDEQKAEPKLASNTPL) is disordered. Residues 71-80 (IPPELTDDSD) show a composition bias toward acidic residues. A disulfide bond links cysteine 118 and cysteine 134.

This sequence belongs to the natriuretic peptide family. Post-translationally, cleaved by CORIN upon secretion to produce the functional hormone.

The protein resides in the secreted. Hormone playing a key role in cardiovascular homeostasis through regulation of natriuresis, diuresis, and vasodilation. Specifically binds and stimulates the cGMP production of the NPR1 receptor. Binds the clearance receptor NPR3. The protein is Natriuretic peptides A (NPPA) of Gallus gallus (Chicken).